A 145-amino-acid polypeptide reads, in one-letter code: MGCGGSRADAIEPRYYESWTRETESTWLTYTDSDAPPSNAAPDSGPEAGGLQAGVLEDGVSANGVPRSTAPGGTSNPEKKMSCGTQCPNPQSLGSGPLTQKQNGLRTTEAKRDAKRTSAKEVTINVTESIRQVDRNQRITKKCIN.

Gly2 carries N-myristoyl glycine lipidation. Cys3 carries the S-palmitoyl cysteine lipid modification. Residues 3–35 are interaction with CAMK2A; sequence CGGSRADAIEPRYYESWTRETESTWLTYTDSDA. The interval 27 to 120 is disordered; the sequence is WLTYTDSDAP…KRDAKRTSAK (94 aa). Residues 83–106 show a composition bias toward polar residues; sequence CGTQCPNPQSLGSGPLTQKQNGLR. Residues 108–119 are compositionally biased toward basic and acidic residues; it reads TEAKRDAKRTSA.

As to quaternary structure, interacts with CAMK2A. In terms of processing, palmitoylation and myristoylation target the protein to the lipid rafts. In terms of tissue distribution, expressed in the brain.

It is found in the cytoplasm. The protein resides in the synapse. The protein localises to the synaptosome. Its subcellular location is the membrane raft. It localises to the postsynaptic density. Functionally, may play a synaptic role at the postsynaptic lipid rafts possibly through interaction with CAMK2A. The polypeptide is Brain and acute leukemia cytoplasmic protein (BAALC) (Sus scrofa (Pig)).